We begin with the raw amino-acid sequence, 84 residues long: Large ribosomal subunit protein bL31 (84 aa).

2 disordered regions span residues 1–41 and 63–84; these read MQHD…DSTN and RRYG…AADE. Residues 21–30 show a composition bias toward polar residues; it reads EITTRSTMET. Positions 68–84 are enriched in acidic residues; sequence TDDDEGDDEETEDAADE.

The protein belongs to the bacterial ribosomal protein bL31 family. Type A subfamily. As to quaternary structure, part of the 50S ribosomal subunit.

Binds the 23S rRNA. This Salinibacter ruber (strain DSM 13855 / M31) protein is Large ribosomal subunit protein bL31.